Here is a 669-residue protein sequence, read N- to C-terminus: UvrABC system protein B (669 aa).

The Helicase ATP-binding domain maps to 26–183 (EGLEDGLAHQ…RRLADLQYTR (158 aa)). ATP is bound at residue 39 to 46 (GVTGSGKT). A Beta-hairpin motif is present at residues 92–115 (YYDYYQPEAYVPSSDTFIEKDASV). In terms of domain architecture, Helicase C-terminal spans 431–593 (QVDDLLSEIR…IVPKGLNKKI (163 aa)). The region spanning 629–664 (EKEIQRLETEMYQHAKDLEFEKAAQTRDKLQTLRAQ) is the UVR domain.

It belongs to the UvrB family. Forms a heterotetramer with UvrA during the search for lesions. Interacts with UvrC in an incision complex.

It is found in the cytoplasm. Its function is as follows. The UvrABC repair system catalyzes the recognition and processing of DNA lesions. A damage recognition complex composed of 2 UvrA and 2 UvrB subunits scans DNA for abnormalities. Upon binding of the UvrA(2)B(2) complex to a putative damaged site, the DNA wraps around one UvrB monomer. DNA wrap is dependent on ATP binding by UvrB and probably causes local melting of the DNA helix, facilitating insertion of UvrB beta-hairpin between the DNA strands. Then UvrB probes one DNA strand for the presence of a lesion. If a lesion is found the UvrA subunits dissociate and the UvrB-DNA preincision complex is formed. This complex is subsequently bound by UvrC and the second UvrB is released. If no lesion is found, the DNA wraps around the other UvrB subunit that will check the other stand for damage. This Proteus mirabilis (strain HI4320) protein is UvrABC system protein B.